The chain runs to 504 residues: MPGRHVTDHQMRLFMKYRQTHSVEVAAAKASISRATAFRMEKEQRLPSQNKPPRGRRRPDPLEHIFDAEVVPLLKAAPGIRAVAVYDEMLRRHPELPEGIRRTLERRIRSWRAVHGEAQEVIFRQTHEPGRLGLSDFTDMGSLSVTIAGQPLDHLLYHFRLVWSGFEHAHVILGGESFVALAEGLQNALWSVGGSPLYHRSDSLSAAFRNLDADAKVDLTNRYEELCAHYRMTPTRNNKGVAHENGSIESSHGHLKNAVRDALLMRGTRDFDDLRSYRAFIDEIVSRRNAAHGKRIDAERPHLQVLPERRTTDFEEVVVTVSRTGGFALRKVFYTVPSRLIGHRLRVRLFDDRLDVFIGGTHLLTLPRGRAHASGKHDQVVNYHHVIHSLRKKPMALLNLVYRDKLFPRPEYRRAFDALIEQLPDRQACKITVELLALAHDRGCERELAEELARTLDARKLPDLMALRAIFGPDPDQLPTVHVQLASLNSYEALMGSAYAGEAA.

Residues 36–60 (TAFRMEKEQRLPSQNKPPRGRRRPD) form a disordered region. Positions 125 to 309 (QTHEPGRLGL…RPHLQVLPER (185 aa)) constitute an Integrase catalytic domain.

This is an uncharacterized protein from Sinorhizobium fredii (strain NBRC 101917 / NGR234).